The following is a 319-amino-acid chain: GATA transcription factor 18 (319 aa).

Residues 1 to 15 show a composition bias toward low complexity; that stretch reads MPDAAAAAAAAQDAD. The segment at 1–74 is disordered; the sequence is MPDAAAAAAA…AAPEPVSALL (74 aa). Acidic residues predominate over residues 31-60; the sequence is DNDDDDGDDGTEEDEEEDDDEEGDEEELPP. In terms of domain architecture, Tify spans 74–109; the sequence is LPGSPNQLTLLFQGEVYVFESVTPEKVQAVLLLLGR. Residues 143 to 185 form the CCT domain; the sequence is RVASLIRFREKRKERNFDKKIRYAVRKEVALRMQRRKGQFAGR. The GATA-type zinc-finger motif lies at 215-242; the sequence is CQNCGTSEKMTPAMRRGPAGPRTLCNAC. A disordered region spans residues 292-319; sequence ITASHGEVMGDSTPANEAEIGAPKAQSQ.

It belongs to the type IV zinc-finger family. Class C subfamily.

It is found in the nucleus. Functionally, transcriptional activator that specifically binds 5'-GATA-3' or 5'-GAT-3' motifs within gene promoters. In Oryza sativa subsp. japonica (Rice), this protein is GATA transcription factor 18.